We begin with the raw amino-acid sequence, 275 residues long: Large ribosomal subunit protein uL2 (275 aa).

2 disordered regions span residues 1–55 and 218–275; these read MGIR…RHRG and PHVR…RRRR. The span at 259-275 shows a compositional bias: basic residues; it reads TRNKKKASSRLIVRRRR.

The protein belongs to the universal ribosomal protein uL2 family. Part of the 50S ribosomal subunit. Forms a bridge to the 30S subunit in the 70S ribosome.

Its function is as follows. One of the primary rRNA binding proteins. Required for association of the 30S and 50S subunits to form the 70S ribosome, for tRNA binding and peptide bond formation. It has been suggested to have peptidyltransferase activity; this is somewhat controversial. Makes several contacts with the 16S rRNA in the 70S ribosome. The polypeptide is Large ribosomal subunit protein uL2 (Crocosphaera subtropica (strain ATCC 51142 / BH68) (Cyanothece sp. (strain ATCC 51142))).